The chain runs to 802 residues: Oligophrenin-1 (802 aa).

A PH domain is found at 265-368 (QPTIEGYLYT…WMEAMDGKEP (104 aa)). Residues 380–564 (MELNEVGFKF…ILIEHFGKIY (185 aa)) enclose the Rho-GAP domain. 2 disordered regions span residues 641 to 663 (QKSG…CQTE) and 682 to 802 (TKAI…GDES). Residues 716 to 732 (HHKEGDTDCFSKVRPPG) are compositionally biased toward basic and acidic residues. Polar residues predominate over residues 751-768 (SSTSQKPESKPETVSSNA).

As to quaternary structure, interacts with HOMER1. Interacts with AMPA receptor complexes. Interacts with SH3GL2 (endophilin-A1). Interacts (via C-terminus) with NR1D1. As to expression, high expression in brain, particularly in the cerebellum, hippocampus, thalamus, frontal lobes, sensory cortex. Found in the myelin sheaths of peripheral nerves, chromaffin cells within the adrenal medulla, and in extra-adrenal chromaffin cells associated with celiac ganglia.

It localises to the postsynapse. Its subcellular location is the presynapse. It is found in the cell projection. The protein localises to the axon. The protein resides in the dendritic spine. It localises to the dendrite. Its subcellular location is the cytoplasm. Its function is as follows. Stimulates GTP hydrolysis of members of the Rho family. Its action on RHOA activity and signaling is implicated in growth and stabilization of dendritic spines, and therefore in synaptic function, in hippocampal neurons. Critical for the stabilization of AMPA receptors at postsynaptic sites. Critical for the regulation of synaptic vesicle endocytosis at pre-synaptic terminals. Required for the localization of NR1D1 to dendrites, can suppress its repressor activity and protect it from proteasomal degradation. This Rattus norvegicus (Rat) protein is Oligophrenin-1 (Ophn1).